Reading from the N-terminus, the 612-residue chain is Elongation factor 4 (612 aa).

The region spanning 11–193 (KHIRNFSIVA…EIVKKVPAPN (183 aa)) is the tr-type G domain. GTP is bound by residues 23 to 28 (DHGKST) and 140 to 143 (NKID).

The protein belongs to the TRAFAC class translation factor GTPase superfamily. Classic translation factor GTPase family. LepA subfamily.

It is found in the cell membrane. It catalyses the reaction GTP + H2O = GDP + phosphate + H(+). Functionally, required for accurate and efficient protein synthesis under certain stress conditions. May act as a fidelity factor of the translation reaction, by catalyzing a one-codon backward translocation of tRNAs on improperly translocated ribosomes. Back-translocation proceeds from a post-translocation (POST) complex to a pre-translocation (PRE) complex, thus giving elongation factor G a second chance to translocate the tRNAs correctly. Binds to ribosomes in a GTP-dependent manner. This chain is Elongation factor 4, found in Lactobacillus gasseri (strain ATCC 33323 / DSM 20243 / BCRC 14619 / CIP 102991 / JCM 1131 / KCTC 3163 / NCIMB 11718 / NCTC 13722 / AM63).